The sequence spans 180 residues: Methionine-R-sulfoxide reductase B2, mitochondrial (180 aa).

A mitochondrion-targeting transit peptide spans 1-41 (MSRFLVRLSTVVSKGATGKSVLPQKRIFAGIRLISSSTGLQ). Residues 49-178 (STDWQRKLSP…NSVALNFKPR (130 aa)) enclose the MsrB domain. 4 residues coordinate Zn(2+): Cys-88, Cys-91, Cys-144, and Cys-147. The active-site Nucleophile is Cys-167.

This sequence belongs to the MsrB Met sulfoxide reductase family. Zn(2+) serves as cofactor.

It is found in the mitochondrion. It carries out the reaction L-methionyl-[protein] + [thioredoxin]-disulfide + H2O = L-methionyl-(R)-S-oxide-[protein] + [thioredoxin]-dithiol. The enzyme catalyses [thioredoxin]-disulfide + L-methionine + H2O = L-methionine (R)-S-oxide + [thioredoxin]-dithiol. In terms of biological role, methionine-sulfoxide reductase that specifically reduces methionine (R)-sulfoxide back to methionine. While in many cases, methionine oxidation is the result of random oxidation following oxidative stress, methionine oxidation is also a post-translational modification that takes place on specific residue. Upon oxidative stress, may play a role in the preservation of mitochondrial integrity by decreasing the intracellular reactive oxygen species build-up through its scavenging role, hence contributing to cell survival and protein maintenance. The polypeptide is Methionine-R-sulfoxide reductase B2, mitochondrial (msrb2) (Danio rerio (Zebrafish)).